Reading from the N-terminus, the 536-residue chain is CRISPR-associated DNA-binding protein Cas12m (536 aa).

The recognition domain (REC1-N) stretch occupies residues 1-59 (MPFGKKARHVKAYQFGADAPQEGMEAVLEQHRLRTDYYNALVEMELRQREERTALLANL). The recognition domain (REC2) stretch occupies residues 60 to 105 (AAESGLESPNQVYERLKAAGEKGIRKHPEYVAARERQKALYGHPRL). A recognition domain (REC1-C) region spans residues 106-159 (LELQSRQREERNALRRSFGAKGLYSSNYLDVERAFDKARQSPELRFRRYSPHEG). The segment at 160-257 (RLAVLYTEGL…RWTVSVVVEV (98 aa)) is wedge domain (WED). The segment at 258 to 270 (EGPPVASPTGRGA) is linker. Residues 271 to 481 (VAVDLGWRRV…QRGKPVRKLN (211 aa)) form a ruvC-I region. Positions 482–516 (PAHTTTDCHACGGALVGDPAKELRLYCPTCERFYD) are target nucleic-acid binding (TNB). Zn(2+) contacts are provided by Cys489, Cys492, Cys508, and Cys511. The interval 517–536 (QDENAARNLLRRAQEVQAQV) is ruvC-II. Position 518 (Asp518) interacts with Mg(2+).

This sequence belongs to the CRISPR-associated DNA-binding protein Cas12m family. Mg(2+) is required as a cofactor. It depends on Zn(2+) as a cofactor.

Pre-crRNA processing is inhibited by EDTA. In terms of biological role, CRISPR (clustered regularly interspaced short palindromic repeat), is an adaptive immune system that provides protection against mobile genetic elements (viruses, transposable elements and conjugative plasmids). CRISPR clusters contain sequences complementary to antecedent mobile elements and target invading nucleic acids. CRISPR clusters are transcribed and processed into CRISPR RNA (crRNA). Recognizes a short motif in the CRISPR repeat sequences (the 5' PAM or protospacer adjacent motif, 5'-TT/CN-3' in this organism) to help distinguish self versus nonself, as targets within the bacterial CRISPR locus do not have PAMs. Cas12m-crRNA binds DNA in a PAM-dependent, crRNA-guided fashion. DNA-binding probably inhibits transcription, leading to gene silencing. No dsDNA, ssDNA or RNA nuclease activity is seen for the crRNA-Cas12m complex. Upon expression in E.coli as a CRISPR region preferentially binds to its associated crRNA. Is required to process pre-crRNA to mature crRNA without a tracrRNA; processing is Mg(2+)-dependent and does not require the predicted RuvC domain catalytic site. The polypeptide is CRISPR-associated DNA-binding protein Cas12m (Allomeiothermus silvanus (strain ATCC 700542 / DSM 9946 / NBRC 106475 / NCIMB 13440 / VI-R2) (Thermus silvanus)).